The following is a 197-amino-acid chain: Protein GrpE (197 aa).

The segment at 1-43 (MSSKEQKTPDGQAPEEIVTEQHEEVESVESAESAEQVDPRDEE) is disordered.

This sequence belongs to the GrpE family. As to quaternary structure, homodimer.

The protein localises to the cytoplasm. Functionally, participates actively in the response to hyperosmotic and heat shock by preventing the aggregation of stress-denatured proteins, in association with DnaK and GrpE. It is the nucleotide exchange factor for DnaK and may function as a thermosensor. Unfolded proteins bind initially to DnaJ; upon interaction with the DnaJ-bound protein, DnaK hydrolyzes its bound ATP, resulting in the formation of a stable complex. GrpE releases ADP from DnaK; ATP binding to DnaK triggers the release of the substrate protein, thus completing the reaction cycle. Several rounds of ATP-dependent interactions between DnaJ, DnaK and GrpE are required for fully efficient folding. The sequence is that of Protein GrpE from Cronobacter sakazakii (strain ATCC BAA-894) (Enterobacter sakazakii).